Reading from the N-terminus, the 372-residue chain is Chaperone protein DnaJ (372 aa).

Residues 5–70 enclose the J domain; it reads DYYDLLEVGR…EKRAGYDRYG (66 aa). The CR-type zinc finger occupies 134–212; the sequence is GIQAPIHYVT…CGGSGRRRDE (79 aa). 8 residues coordinate Zn(2+): cysteine 147, cysteine 150, cysteine 164, cysteine 167, cysteine 186, cysteine 189, cysteine 200, and cysteine 203. 4 CXXCXGXG motif repeats span residues 147-154, 164-171, 186-193, and 200-207; these read CDTCQGTG, CHTCQGSG, CTTCYGEG, and CKKCGGSG.

Belongs to the DnaJ family. In terms of assembly, homodimer. It depends on Zn(2+) as a cofactor.

It localises to the cytoplasm. In terms of biological role, participates actively in the response to hyperosmotic and heat shock by preventing the aggregation of stress-denatured proteins and by disaggregating proteins, also in an autonomous, DnaK-independent fashion. Unfolded proteins bind initially to DnaJ; upon interaction with the DnaJ-bound protein, DnaK hydrolyzes its bound ATP, resulting in the formation of a stable complex. GrpE releases ADP from DnaK; ATP binding to DnaK triggers the release of the substrate protein, thus completing the reaction cycle. Several rounds of ATP-dependent interactions between DnaJ, DnaK and GrpE are required for fully efficient folding. Also involved, together with DnaK and GrpE, in the DNA replication of plasmids through activation of initiation proteins. This Wolbachia pipientis wMel protein is Chaperone protein DnaJ.